The chain runs to 255 residues: Methionine aminopeptidase (255 aa).

His76 contacts substrate. Asp93, Asp104, and His167 together coordinate a divalent metal cation. His174 lines the substrate pocket. A divalent metal cation-binding residues include Glu201 and Glu232.

The protein belongs to the peptidase M24A family. Methionine aminopeptidase type 1 subfamily. In terms of assembly, monomer. The cofactor is Co(2+). Zn(2+) is required as a cofactor. Requires Mn(2+) as cofactor. It depends on Fe(2+) as a cofactor.

It carries out the reaction Release of N-terminal amino acids, preferentially methionine, from peptides and arylamides.. Functionally, removes the N-terminal methionine from nascent proteins. The N-terminal methionine is often cleaved when the second residue in the primary sequence is small and uncharged (Met-Ala-, Cys, Gly, Pro, Ser, Thr, or Val). Requires deformylation of the N(alpha)-formylated initiator methionine before it can be hydrolyzed. The protein is Methionine aminopeptidase of Treponema pallidum (strain Nichols).